The primary structure comprises 517 residues: 2-isopropylmalate synthase (517 aa).

Residues 5–268 (IIIFDTTLRD…DTRINTQEIH (264 aa)) form the Pyruvate carboxyltransferase domain. Mn(2+) contacts are provided by Asp14, His202, His204, and Asn238. Residues 393–517 (SLDVITSQTI…ADLKSHKISQ (125 aa)) form a regulatory domain region.

This sequence belongs to the alpha-IPM synthase/homocitrate synthase family. LeuA type 1 subfamily. In terms of assembly, homodimer. Mn(2+) serves as cofactor.

Its subcellular location is the cytoplasm. The catalysed reaction is 3-methyl-2-oxobutanoate + acetyl-CoA + H2O = (2S)-2-isopropylmalate + CoA + H(+). Its pathway is amino-acid biosynthesis; L-leucine biosynthesis; L-leucine from 3-methyl-2-oxobutanoate: step 1/4. Its function is as follows. Catalyzes the condensation of the acetyl group of acetyl-CoA with 3-methyl-2-oxobutanoate (2-ketoisovalerate) to form 3-carboxy-3-hydroxy-4-methylpentanoate (2-isopropylmalate). The chain is 2-isopropylmalate synthase from Histophilus somni (strain 129Pt) (Haemophilus somnus).